The sequence spans 383 residues: MQPSARRPFDLATPAPNGLRRGRTTGTCATAAVKAALLRLVRGETVDAVEVSLPDPDYCLEVPIARIEPLASGAVRADVLKYAGDDPDNTDGATIFAEVSVNHAGEVRFMAAPGVGTVTQPGLRVPPGEPAINPVPRQMMRMAVDEVLAGGANPGFDLAIGCVDGERIARRTFNPMLGIVGGISILGTSGIVEPMSLAAWMASIEVYVRVALGDAPEAIAFTPGKIGRAYAAHPLALSKKQVVQIANFIGASLDYAQTALEEDRHRLGTLWVLGHPGKLAKVLDGVWDTHSSKSGMAMGSVAAVAAELGVAAALVEQIKTANTVENVIQILQHQPGAQAFWTEIEQRIAARMQPRVPRADRVAVRLFAMDGTPLGAAGQEAGA.

The tract at residues 1 to 24 (MQPSARRPFDLATPAPNGLRRGRT) is disordered.

Belongs to the CbiD family.

The enzyme catalyses Co-precorrin-5B + S-adenosyl-L-methionine = Co-precorrin-6A + S-adenosyl-L-homocysteine. The protein operates within cofactor biosynthesis; adenosylcobalamin biosynthesis; cob(II)yrinate a,c-diamide from sirohydrochlorin (anaerobic route): step 6/10. Functionally, catalyzes the methylation of C-1 in cobalt-precorrin-5B to form cobalt-precorrin-6A. This is Cobalt-precorrin-5B C(1)-methyltransferase from Ralstonia nicotianae (strain ATCC BAA-1114 / GMI1000) (Ralstonia solanacearum).